Consider the following 292-residue polypeptide: Cytidine deaminase (292 aa).

CMP/dCMP-type deaminase domains follow at residues 47-167 (TPLK…FGPK) and 186-292 (DHQD…YYSL). 88–90 (NQE) is a substrate binding site. Residue histidine 101 participates in Zn(2+) binding. Glutamate 103 functions as the Proton donor in the catalytic mechanism. 2 residues coordinate Zn(2+): cysteine 128 and cysteine 131.

The protein belongs to the cytidine and deoxycytidylate deaminase family. Homodimer. Zn(2+) serves as cofactor.

It catalyses the reaction cytidine + H2O + H(+) = uridine + NH4(+). It carries out the reaction 2'-deoxycytidine + H2O + H(+) = 2'-deoxyuridine + NH4(+). Its function is as follows. This enzyme scavenges exogenous and endogenous cytidine and 2'-deoxycytidine for UMP synthesis. This chain is Cytidine deaminase, found in Haemophilus influenzae (strain 86-028NP).